Consider the following 407-residue polypeptide: MNKWTDVKKVVLAYSGGLDTSIILKWLQSELGAEVVTFTADLGQGEELESARRKAEIMGIKEIYIEDLREEFVRDFVFPMFRANAVYEGVYLLGTSIARPLISKRLIEIAKETGADAIAHGATGKGNDQVRFELSAYALDPDIKIIAPWRDWTFKSRTDLIEFARVHQIPVEKDKEGEAPFSVDANLLHSSSEGKILENPAIPAPEYVHMRTLSPETAPDKATIITIGFKKGDAVSINGEMLSPATLLAQLNNYGRDNGIGRLDLVENRFVGMKSRGIYETPGGTILLTAHRAIESLTLDRGAAHLKDELMPRYAELIYYGFWFSPERKMLQAAIDLSQEHVEGEVTLKLYKGNVIVEGRQSKKSLYFDKLVTFEDDQGAYDQKDAAGFIKLNALRLRTLAARSSVL.

Residues 13–21 (AYSGGLDTS) and alanine 40 contribute to the ATP site. Residues tyrosine 91 and serine 96 each coordinate L-citrulline. Residue glycine 121 coordinates ATP. L-aspartate contacts are provided by threonine 123, asparagine 127, and aspartate 128. Position 127 (asparagine 127) interacts with L-citrulline. L-citrulline-binding residues include arginine 131, serine 182, serine 191, glutamate 267, and tyrosine 279.

This sequence belongs to the argininosuccinate synthase family. Type 1 subfamily. As to quaternary structure, homotetramer.

The protein localises to the cytoplasm. The catalysed reaction is L-citrulline + L-aspartate + ATP = 2-(N(omega)-L-arginino)succinate + AMP + diphosphate + H(+). The protein operates within amino-acid biosynthesis; L-arginine biosynthesis; L-arginine from L-ornithine and carbamoyl phosphate: step 2/3. This is Argininosuccinate synthase from Bartonella bacilliformis (strain ATCC 35685 / KC583 / Herrer 020/F12,63).